The chain runs to 348 residues: MTAEKSKALAAALAQIEKQFGKGSIMRMGDGEATENIQVVSTGSLGLDIALGVGGLPRGRVVEIYGPESSGKTTLTLQVIAELQKIGGTAAFIDAEHALDVQYAAKLGVNVPELLISQPDTGEQALEITDALVRSGSIDMIVIDSVAALVPKAEIEGEMGDSLPGLQARLMSQALRKLTGTIKRTNCLVIFINQIRMKIGVMFGNPETTTGGNALKFYSSVRLDIRRIGSIKKNDEVIGNETRVKVVKNKVSPPFREAIFDILYGEGISRQGEIIDLGVQAKIVDKAGAWYSYNGEKIGQGKDNAREFLRENPEIAREIENRIRESLGVVAMPDGAGQDEAEAMDEEE.

Residue 66 to 73 coordinates ATP; that stretch reads GPESSGKT.

The protein belongs to the RecA family.

Its subcellular location is the cytoplasm. Can catalyze the hydrolysis of ATP in the presence of single-stranded DNA, the ATP-dependent uptake of single-stranded DNA by duplex DNA, and the ATP-dependent hybridization of homologous single-stranded DNAs. It interacts with LexA causing its activation and leading to its autocatalytic cleavage. The sequence is that of Protein RecA from Burkholderia lata (strain ATCC 17760 / DSM 23089 / LMG 22485 / NCIMB 9086 / R18194 / 383).